A 209-amino-acid chain; its full sequence is Large ribosomal subunit protein uL4 (209 aa).

The tract at residues R46–G76 is disordered. Residues K63 to G76 show a composition bias toward basic residues.

The protein belongs to the universal ribosomal protein uL4 family. In terms of assembly, part of the 50S ribosomal subunit.

In terms of biological role, one of the primary rRNA binding proteins, this protein initially binds near the 5'-end of the 23S rRNA. It is important during the early stages of 50S assembly. It makes multiple contacts with different domains of the 23S rRNA in the assembled 50S subunit and ribosome. Forms part of the polypeptide exit tunnel. The protein is Large ribosomal subunit protein uL4 of Halothermothrix orenii (strain H 168 / OCM 544 / DSM 9562).